A 518-amino-acid polypeptide reads, in one-letter code: Retinal dehydrogenase 2 (518 aa).

A Phosphotyrosine modification is found at Y168. Residues 184–186 (IPW), 210–213 (KPAE), and 264–266 (STE) contribute to the NAD(+) site. E286 (proton acceptor) is an active-site residue. C320 acts as the Nucleophile in catalysis. Phosphoserine is present on S351. Residues 366-370 (KQYNK) and E417 each bind NAD(+).

The protein belongs to the aldehyde dehydrogenase family. Homotetramer.

Its subcellular location is the cytoplasm. It catalyses the reaction retinal + NAD(+) + H2O = retinoate + NADH + 2 H(+). It carries out the reaction all-trans-retinal + NAD(+) + H2O = all-trans-retinoate + NADH + 2 H(+). The enzyme catalyses all-trans-13,14-dihydroretinal + NAD(+) + H2O = all-trans-13,14-dihydroretinoate + NADH + 2 H(+). It functions in the pathway cofactor metabolism; retinol metabolism. In terms of biological role, catalyzes the NAD-dependent oxidation of aldehyde substrates, such as all-trans-retinal and all-trans-13,14-dihydroretinal, to their corresponding carboxylic acids, all-trans-retinoate and all-trans-13,14-dihydroretinoate, respectively. Retinoate signaling is critical for the transcriptional control of many genes, for instance it is crucial for initiation of meiosis in both male and female. Recognizes retinal as substrate, both in its free form and when bound to cellular retinol-binding protein. Can metabolize octanal and decanal, but has only very low activity with benzaldehyde, acetaldehyde and propanal. Displays complete lack of activity with citral. The sequence is that of Retinal dehydrogenase 2 (ALDH1A2) from Homo sapiens (Human).